The sequence spans 416 residues: Enterobactin exporter EntS (416 aa).

Residues 1 to 21 (MNKQSWLLNLSLLKTHPAFRA) are Cytoplasmic-facing. The helical transmembrane segment at 22 to 42 (VFLARFISIVSLGLLGVAVPV) threads the bilayer. Topologically, residues 43-55 (QIQMMTHSTWQVG) are periplasmic. A helical transmembrane segment spans residues 56 to 76 (LSVTLTGGAMFVGLMVGGVLA). The Cytoplasmic portion of the chain corresponds to 77 to 83 (DRYERKK). The chain crosses the membrane as a helical span at residues 84 to 104 (VILLARGTCGIGFIGLCLNAL). The Periplasmic portion of the chain corresponds to 105 to 109 (LPEPS). The helical transmembrane segment at 110 to 130 (LLAIYLLGLWDGFFASLGVTA) threads the bilayer. Over 131–156 (LLAATPALVGRENLMQAGALTMLTVR) the chain is Cytoplasmic. A helical transmembrane segment spans residues 157–177 (LGSVISPMIGGLLLATGGVAW). Position 178 (Asn-178) is a topological domain, periplasmic. The chain crosses the membrane as a helical span at residues 179–199 (YGLAAAGTFITLLPLLSLPAL). Residues 200 to 218 (PPPPQPREHPLKSLLAGFR) lie on the Cytoplasmic side of the membrane. A helical membrane pass occupies residues 219–239 (FLLASPLVGGIALLGGLLTMA). Residues 240 to 256 (SAVRVLYPALADNWQMS) lie on the Periplasmic side of the membrane. The helical transmembrane segment at 257-277 (AAEIGFLYAAIPLGAAIGALT) threads the bilayer. The Cytoplasmic portion of the chain corresponds to 278–287 (SGKLAHSARP). The chain crosses the membrane as a helical span at residues 288 to 307 (GLLMLLSTLGSFLAIGLFGL). Residues 308–313 (MPMWIL) lie on the Periplasmic side of the membrane. The chain crosses the membrane as a helical span at residues 314–336 (GVVCLALFGWLSAVSSLLQYTML). The Cytoplasmic segment spans residues 337–356 (QTQTPEAMLGRINGLWTAQN). A helical membrane pass occupies residues 357–377 (VTGDAIGAALLGGLGAMMTPV). Position 378 (Ala-378) is a topological domain, periplasmic. Residues 379-399 (SASASGFGLLIIGVLLLLVLV) traverse the membrane as a helical segment. At 400–416 (ELRRFRQTPPQVTASDS) the chain is on the cytoplasmic side.

Belongs to the major facilitator superfamily. EntS (TC 2.A.1.38) family.

The protein resides in the cell inner membrane. Component of an export pathway for enterobactin. The polypeptide is Enterobactin exporter EntS (Shigella boydii serotype 18 (strain CDC 3083-94 / BS512)).